We begin with the raw amino-acid sequence, 303 residues long: Acetaldehyde dehydrogenase 1 (303 aa).

Catalysis depends on C130, which acts as the Acyl-thioester intermediate. Residues 161-169 (SVGPGTRKN) and N272 each bind NAD(+).

It belongs to the acetaldehyde dehydrogenase family.

The catalysed reaction is acetaldehyde + NAD(+) + CoA = acetyl-CoA + NADH + H(+). The polypeptide is Acetaldehyde dehydrogenase 1 (Cupriavidus metallidurans (strain ATCC 43123 / DSM 2839 / NBRC 102507 / CH34) (Ralstonia metallidurans)).